The chain runs to 174 residues: Inactive signal peptidase IA (174 aa).

The Cytoplasmic portion of the chain corresponds to 1 to 7; it reads MKKVVKY. A helical membrane pass occupies residues 8–28; that stretch reads LISLILAIIIVLFVQTFVIVG. Over 29–174 the chain is Extracellular; that stretch reads HVIPNNDMSP…FSKWTIQFKS (146 aa).

Belongs to the peptidase S26 family.

The protein resides in the cell membrane. Functionally, catalytically inactive. The protein is Inactive signal peptidase IA (spsA) of Staphylococcus aureus (strain Mu50 / ATCC 700699).